Consider the following 502-residue polypeptide: D-erythritol 1-phosphate dehydrogenase (502 aa).

8 to 36 provides a ligand contact to FAD; it reads DLFVIGGGINGAGVARDAAGRGLKVVLAE.

Belongs to the FAD-dependent glycerol-3-phosphate dehydrogenase family. Requires FAD as cofactor.

It carries out the reaction D-erythritol 1-phosphate + NADP(+) = D-erythrulose 1-phosphate + NADPH + H(+). The protein operates within carbohydrate metabolism; erythritol degradation. In terms of biological role, catalyzes the oxydation of D-erythritol 1-phosphate to D-erythrulose 1-phosphate. This chain is D-erythritol 1-phosphate dehydrogenase, found in Brucella abortus (strain 2308).